Reading from the N-terminus, the 133-residue chain is Profilin Sal k 4.0101 (133 aa).

A disulfide bridge connects residues Cys95 and Cys117.

The protein belongs to the profilin family. In terms of assembly, occurs in many kinds of cells as a complex with monomeric actin in a 1:1 ratio. As to expression, expressed in pollen.

Its subcellular location is the cytoplasm. The protein localises to the cytoskeleton. Its function is as follows. Binds to actin and affects the structure of the cytoskeleton. At high concentrations, profilin prevents the polymerization of actin, whereas it enhances it at low concentrations. The polypeptide is Profilin Sal k 4.0101 (Kali turgidum (Prickly saltwort)).